The following is a 245-amino-acid chain: tRNA1(Val) (adenine(37)-N6)-methyltransferase (245 aa).

Belongs to the methyltransferase superfamily. tRNA (adenine-N(6)-)-methyltransferase family.

It localises to the cytoplasm. It catalyses the reaction adenosine(37) in tRNA1(Val) + S-adenosyl-L-methionine = N(6)-methyladenosine(37) in tRNA1(Val) + S-adenosyl-L-homocysteine + H(+). In terms of biological role, specifically methylates the adenine in position 37 of tRNA(1)(Val) (anticodon cmo5UAC). The polypeptide is tRNA1(Val) (adenine(37)-N6)-methyltransferase (Salmonella arizonae (strain ATCC BAA-731 / CDC346-86 / RSK2980)).